Reading from the N-terminus, the 373-residue chain is SWI/SNF-related matrix-associated actin-dependent regulator of chromatin subfamily B member 1-A (373 aa).

A DNA-binding region spans residues 1–101 (MALSKTYGQK…DEKYKAVSIS (101 aa)).

Belongs to the SNF5 family. Component of the multiprotein chromatin-remodeling complexes SWI/SNF. Component of neural progenitors-specific chromatin remodeling complex (npBAF complex) and the neuron-specific chromatin remodeling complex (nBAF complex). Component of the BAF (SWI/SNF) chromatin remodeling complex. Component of the SWI/SNF-B (PBAF) chromatin remodeling complex. Binds to double-stranded DNA.

Its subcellular location is the nucleus. Functionally, involved in chromatin-remodeling. Core component of the BAF (SWI/SNF) complex. This ATP-dependent chromatin-remodeling complex plays important roles in cell proliferation and differentiation, in cellular antiviral activities and inhibition of tumor formation. Belongs to the neural progenitors-specific chromatin remodeling complex (npBAF complex) and the neuron-specific chromatin remodeling complex (nBAF complex) and may play a role in neural development. The protein is SWI/SNF-related matrix-associated actin-dependent regulator of chromatin subfamily B member 1-A (smarcb1a) of Danio rerio (Zebrafish).